A 374-amino-acid chain; its full sequence is Aminomethyltransferase (374 aa).

Belongs to the GcvT family. The glycine cleavage system is composed of four proteins: P, T, L and H.

The catalysed reaction is N(6)-[(R)-S(8)-aminomethyldihydrolipoyl]-L-lysyl-[protein] + (6S)-5,6,7,8-tetrahydrofolate = N(6)-[(R)-dihydrolipoyl]-L-lysyl-[protein] + (6R)-5,10-methylene-5,6,7,8-tetrahydrofolate + NH4(+). Functionally, the glycine cleavage system catalyzes the degradation of glycine. The chain is Aminomethyltransferase from Prochlorococcus marinus (strain MIT 9303).